We begin with the raw amino-acid sequence, 153 residues long: MVATKTFALLLLSLFLAVGLGEKKEGHFSALPSLPVGSHAKVSSPQPRGPRYAEGTFISDYSIAMDKIHQQDFVNWLLAQKGKKNDWKHNITQREARALELASQANRKEEEAVEPQSSPAKNPSDEDLLRDLLIQELLACLLDQTNLCRLRSR.

Positions 1–21 (MVATKTFALLLLSLFLAVGLG) are cleaved as a signal peptide. 2 propeptides span residues 22-50 (EKKE…PRGP) and 95-153 (EARA…LRSR). The segment at 102–125 (ASQANRKEEEAVEPQSSPAKNPSD) is disordered.

Belongs to the glucagon family.

It localises to the secreted. Functionally, potent stimulator of insulin secretion and relatively poor inhibitor of gastric acid secretion. This chain is Gastric inhibitory polypeptide (GIP), found in Homo sapiens (Human).